Reading from the N-terminus, the 83-residue chain is UPF0512 protein G (83 aa).

This sequence belongs to the UPF0512 family.

This chain is UPF0512 protein G, found in Dictyostelium discoideum (Social amoeba).